Here is a 229-residue protein sequence, read N- to C-terminus: 3,4-dihydroxy-2-butanone 4-phosphate synthase (229 aa).

Residues 28 to 29 (RE), aspartate 33, 164 to 168 (RGGHT), and glutamate 188 each bind D-ribulose 5-phosphate. Glutamate 29 lines the Mg(2+) pocket. Histidine 167 contacts Mg(2+).

The protein belongs to the DHBP synthase family. As to quaternary structure, homodimer. Mg(2+) serves as cofactor. It depends on Mn(2+) as a cofactor.

It carries out the reaction D-ribulose 5-phosphate = (2S)-2-hydroxy-3-oxobutyl phosphate + formate + H(+). Its pathway is cofactor biosynthesis; riboflavin biosynthesis; 2-hydroxy-3-oxobutyl phosphate from D-ribulose 5-phosphate: step 1/1. In terms of biological role, catalyzes the conversion of D-ribulose 5-phosphate to formate and 3,4-dihydroxy-2-butanone 4-phosphate. The chain is 3,4-dihydroxy-2-butanone 4-phosphate synthase from Methanothermobacter thermautotrophicus (strain ATCC 29096 / DSM 1053 / JCM 10044 / NBRC 100330 / Delta H) (Methanobacterium thermoautotrophicum).